The following is a 289-amino-acid chain: Glycine--tRNA ligase alpha subunit (289 aa).

Belongs to the class-II aminoacyl-tRNA synthetase family. As to quaternary structure, tetramer of two alpha and two beta subunits.

It is found in the cytoplasm. The enzyme catalyses tRNA(Gly) + glycine + ATP = glycyl-tRNA(Gly) + AMP + diphosphate. The chain is Glycine--tRNA ligase alpha subunit from Rickettsia felis (strain ATCC VR-1525 / URRWXCal2) (Rickettsia azadi).